Reading from the N-terminus, the 393-residue chain is Elongation factor Tu (393 aa).

The tr-type G domain maps to 10-203 (KPHVNIGTIG…AVDEFIPEPL (194 aa)). Positions 19–26 (GHVDHGKT) are G1. 19-26 (GHVDHGKT) lines the GTP pocket. Position 26 (Thr-26) interacts with Mg(2+). Residues 60 to 64 (GITIS) are G2. Positions 81 to 84 (DCPG) are G3. Residues 81-85 (DCPGH) and 136-139 (NKVD) contribute to the GTP site. Residues 136–139 (NKVD) are G4. Residues 173–175 (SAL) are G5.

It belongs to the TRAFAC class translation factor GTPase superfamily. Classic translation factor GTPase family. EF-Tu/EF-1A subfamily. Monomer.

It is found in the cytoplasm. It carries out the reaction GTP + H2O = GDP + phosphate + H(+). In terms of biological role, GTP hydrolase that promotes the GTP-dependent binding of aminoacyl-tRNA to the A-site of ribosomes during protein biosynthesis. The chain is Elongation factor Tu from Chlorobium phaeobacteroides (strain DSM 266 / SMG 266 / 2430).